A 328-amino-acid chain; its full sequence is Ankyrin repeat domain-containing protein 2 (328 aa).

Residue Ser-36 is modified to Phosphoserine. Ser-68 carries the phosphoserine; by PKB/AKT2 modification. The tract at residues 96–116 (RDALAAAQEPPPEPEEITGPV) is disordered. ANK repeat units follow at residues 116–145 (VNEE…SADT), 149–178 (FRRT…TVDF), 182–211 (LDCT…DTNV), 215–244 (LLST…DINA), and 248–277 (EGDS…DMMA). Residues 297–328 (RHALEHPEPESEQNGLERPGSGRETPQPIPAQ) form a disordered region.

As to quaternary structure, interacts with ID3; both proteins cooperate in myoblast differentiation. Interacts with TTN/titin. Interacts (via ANK repeats) with TCAP; the interaction is direct. Interacts with TJP1 (via PDZ domains). Interacts with PML; the interaction is direct. Interacts with p53/TP53. Interacts with YBX1. Interacts with AKT2. In terms of processing, phosphorylation at Ser-68 by PKB/AKT2 in response to oxidative stress induces translocation to the nucleus and negatively regulates myoblast differentiation. In terms of tissue distribution, expressed by myoblasts (at protein level). Expressed in skeletal and cardiac muscles.

The protein resides in the cytoplasm. The protein localises to the myofibril. Its subcellular location is the sarcomere. It is found in the i band. It localises to the cytosol. The protein resides in the nucleus. The protein localises to the PML body. Functionally, functions as a negative regulator of myocyte differentiation. May interact with both sarcoplasmic structural proteins and nuclear proteins to regulate gene expression during muscle development and in response to muscle stress. This Mus musculus (Mouse) protein is Ankyrin repeat domain-containing protein 2 (Ankrd2).